The chain runs to 211 residues: Redox-sensing transcriptional repressor Rex (211 aa).

Positions 17 to 56 (LYYRLVSILKGKGIDRVNSKTISEALQIDSATIRRDFSYF) form a DNA-binding region, H-T-H motif. 91–96 (GIGNLG) is an NAD(+) binding site.

This sequence belongs to the transcriptional regulatory Rex family. In terms of assembly, homodimer.

It is found in the cytoplasm. Modulates transcription in response to changes in cellular NADH/NAD(+) redox state. In Staphylococcus epidermidis (strain ATCC 12228 / FDA PCI 1200), this protein is Redox-sensing transcriptional repressor Rex.